Consider the following 259-residue polypeptide: DNA repair protein RecO (259 aa).

It belongs to the RecO family.

Its function is as follows. Involved in DNA repair and RecF pathway recombination. This is DNA repair protein RecO from Leuconostoc mesenteroides subsp. mesenteroides (strain ATCC 8293 / DSM 20343 / BCRC 11652 / CCM 1803 / JCM 6124 / NCDO 523 / NBRC 100496 / NCIMB 8023 / NCTC 12954 / NRRL B-1118 / 37Y).